Here is a 538-residue protein sequence, read N- to C-terminus: Putative ABC1 protein At2g40090 (538 aa).

The first 26 residues, 1–26, serve as a signal peptide directing secretion; it reads MAARSLWRTRTKLLVVGTALCGGSGA.

This sequence belongs to the protein kinase superfamily. ADCK protein kinase family.

This is Putative ABC1 protein At2g40090 from Arabidopsis thaliana (Mouse-ear cress).